The sequence spans 171 residues: Co-chaperone protein HscB (171 aa).

The 73-residue stretch at 2 to 74 (DYFTFFGLPA…LMRAEYLLSL (73 aa)) folds into the J domain.

Belongs to the HscB family. As to quaternary structure, interacts with HscA and stimulates its ATPase activity. Interacts with IscU.

Co-chaperone involved in the maturation of iron-sulfur cluster-containing proteins. Seems to help targeting proteins to be folded toward HscA. In Shigella sonnei (strain Ss046), this protein is Co-chaperone protein HscB.